Here is a 138-residue protein sequence, read N- to C-terminus: Thyrotropin subunit beta (138 aa).

Residues 1–20 form the signal peptide; sequence MSAAVLLSVLFALACGQAAS. Cystine bridges form between Cys-22–Cys-72, Cys-36–Cys-87, Cys-39–Cys-125, Cys-47–Cys-103, Cys-51–Cys-105, and Cys-108–Cys-115. Residue Asn-43 is glycosylated (N-linked (GlcNAc...) asparagine). Positions 133-138 are excised as a propeptide; it reads LGGFSV.

This sequence belongs to the glycoprotein hormones subunit beta family. In terms of assembly, heterodimer of a common alpha chain and a unique beta chain which confers biological specificity to thyrotropin, lutropin, follitropin and gonadotropin.

The protein localises to the secreted. Functionally, indispensable for the control of thyroid structure and metabolism. The chain is Thyrotropin subunit beta (Tshb) from Mus musculus (Mouse).